Consider the following 63-residue polypeptide: uncharacterized protein (63 aa).

It localises to the mitochondrion. This is an uncharacterized protein from Marchantia polymorpha (Common liverwort).